A 142-amino-acid polypeptide reads, in one-letter code: Two-component response regulator ARR22 (142 aa).

The Response regulatory domain maps to 23-140 (NVLIVDDDPL…KIFPLISHLF (118 aa)). 4-aspartylphosphate is present on aspartate 74.

It belongs to the ARR family. Type-A subfamily. Two-component system major event consists of a His-to-Asp phosphorelay between a sensor histidine kinase (HK) and a response regulator (RR). In plants, the His-to-Asp phosphorelay involves an additional intermediate named Histidine-containing phosphotransfer protein (HPt). This multistep phosphorelay consists of a His-Asp-His-Asp sequential transfer of a phosphate group between first a His and an Asp of the HK protein, followed by the transfer to a conserved His of the HPt protein and finally the transfer to an Asp in the receiver domain of the RR protein.

It localises to the nucleus. Functionally, functions as a response regulator involved in His-to-Asp phosphorelay signal transduction system. Phosphorylation of the Asp residue in the receiver domain activates the ability of the protein to promote the transcription of target genes. Type-A response regulators seem to act as negative regulators of the cytokinin signaling. The polypeptide is Two-component response regulator ARR22 (ARR22) (Arabidopsis thaliana (Mouse-ear cress)).